Consider the following 267-residue polypeptide: Phosphate import ATP-binding protein PstB 2 (267 aa).

One can recognise an ABC transporter domain in the interval 21–262 (LATKDLHVYY…AQCQSTNDYV (242 aa)). 53-60 (GPSGCGKS) serves as a coordination point for ATP.

It belongs to the ABC transporter superfamily. Phosphate importer (TC 3.A.1.7) family. The complex is composed of two ATP-binding proteins (PstB), two transmembrane proteins (PstC and PstA) and a solute-binding protein (PstS).

The protein resides in the cell membrane. It carries out the reaction phosphate(out) + ATP + H2O = ADP + 2 phosphate(in) + H(+). In terms of biological role, part of the ABC transporter complex PstSACB involved in phosphate import. Responsible for energy coupling to the transport system. This is Phosphate import ATP-binding protein PstB 2 from Streptococcus pyogenes serotype M1.